Here is a 72-residue protein sequence, read N- to C-terminus: Putative DNA-directed RNA polymerase subunit omega (72 aa).

The protein belongs to the RNA polymerase subunit omega family.

Its subcellular location is the plastid. It localises to the chloroplast. It catalyses the reaction RNA(n) + a ribonucleoside 5'-triphosphate = RNA(n+1) + diphosphate. In terms of biological role, may be involved in RNA polymerase activity. The sequence is that of Putative DNA-directed RNA polymerase subunit omega (rpoZ) from Cyanidium caldarium (Red alga).